The sequence spans 81 residues: Cytotoxin 3 (81 aa).

The signal sequence occupies residues 1–21 (MKTLLLTLVVVTIVCLDLGYT). Cystine bridges form between cysteine 24/cysteine 42, cysteine 35/cysteine 59, cysteine 63/cysteine 74, and cysteine 75/cysteine 80.

This sequence belongs to the three-finger toxin family. Short-chain subfamily. Type IA cytotoxin sub-subfamily. Monomer in solution; Homodimer and oligomer in the presence of negatively charged lipids forming a pore with a size ranging between 20 and 30 Angstroms. Interacts with Kv channel-interacting protein 1 (KCNIP1) in a calcium-independent manner. As to expression, expressed by the venom gland.

The protein resides in the secreted. It localises to the target cell membrane. Its function is as follows. Basic protein that binds to cell membrane and depolarizes cardiomyocytes. This cytotoxin also possesses lytic activity on many other cells, including red blood cells. Interaction with sulfatides in the cell membrane induces pore formation and cell internalization. Cytotoxicity is due to pore formation, and to another mechanism independent of membrane-damaging activity. When internalized, it targets the mitochondrial membrane and induces mitochondrial swelling and fragmentation. It inhibits protein kinases C. It binds to the integrin alpha-V/beta-3 (ITGAV/ITGB3) with a moderate affinity. It also binds with high affinity to heparin. This is Cytotoxin 3 from Naja atra (Chinese cobra).